Here is a 450-residue protein sequence, read N- to C-terminus: Glucose-6-phosphate isomerase (450 aa).

T39 is modified (phosphothreonine). E291 (proton donor) is an active-site residue. Residues H312 and K426 contribute to the active site.

The protein belongs to the GPI family.

The protein localises to the cytoplasm. The enzyme catalyses alpha-D-glucose 6-phosphate = beta-D-fructose 6-phosphate. It participates in carbohydrate biosynthesis; gluconeogenesis. The protein operates within carbohydrate degradation; glycolysis; D-glyceraldehyde 3-phosphate and glycerone phosphate from D-glucose: step 2/4. Catalyzes the reversible isomerization of glucose-6-phosphate to fructose-6-phosphate. This is Glucose-6-phosphate isomerase from Bacillus thuringiensis (strain Al Hakam).